The following is a 362-amino-acid chain: Peptide chain release factor 1 (362 aa).

Gln237 is modified (N5-methylglutamine).

This sequence belongs to the prokaryotic/mitochondrial release factor family. Methylated by PrmC. Methylation increases the termination efficiency of RF1.

The protein localises to the cytoplasm. Peptide chain release factor 1 directs the termination of translation in response to the peptide chain termination codons UAG and UAA. In Marinomonas sp. (strain MWYL1), this protein is Peptide chain release factor 1.